Consider the following 218-residue polypeptide: Octanoyltransferase (218 aa).

In terms of domain architecture, BPL/LPL catalytic spans 32 to 218 (GDAPEAVWLL…LRTFSRSFPD (187 aa)). Substrate is bound by residues 71–78 (RGGQYTYH), 151–153 (AIG), and 164–166 (GLS). Cys-182 serves as the catalytic Acyl-thioester intermediate.

It belongs to the LipB family.

The protein localises to the cytoplasm. It catalyses the reaction octanoyl-[ACP] + L-lysyl-[protein] = N(6)-octanoyl-L-lysyl-[protein] + holo-[ACP] + H(+). The protein operates within protein modification; protein lipoylation via endogenous pathway; protein N(6)-(lipoyl)lysine from octanoyl-[acyl-carrier-protein]: step 1/2. Catalyzes the transfer of endogenously produced octanoic acid from octanoyl-acyl-carrier-protein onto the lipoyl domains of lipoate-dependent enzymes. Lipoyl-ACP can also act as a substrate although octanoyl-ACP is likely to be the physiological substrate. This chain is Octanoyltransferase, found in Cereibacter sphaeroides (strain ATCC 17025 / ATH 2.4.3) (Rhodobacter sphaeroides).